The primary structure comprises 555 residues: Glutamine--tRNA ligase (555 aa).

The 'HIGH' region motif lies at 34–44 (PEPNGYLHIGH). ATP contacts are provided by residues 35–37 (EPN) and 41–47 (HIGHAKS). L-glutamine contacts are provided by aspartate 67 and tyrosine 212. ATP-binding positions include threonine 231, 261-262 (RL), and 269-271 (MSK). The 'KMSKS' region motif lies at 268–272 (VMSKR). The tract at residues 317–324 (TKQDNTIE) is interaction with tRNA.

It belongs to the class-I aminoacyl-tRNA synthetase family. As to quaternary structure, monomer.

It localises to the cytoplasm. The enzyme catalyses tRNA(Gln) + L-glutamine + ATP = L-glutaminyl-tRNA(Gln) + AMP + diphosphate. The sequence is that of Glutamine--tRNA ligase from Salmonella newport (strain SL254).